The following is a 112-amino-acid chain: MNFDMSKLVQQAQKMQEQMKKAQQERENMEVIGESGAGLVTVTMTGKYDVKSVSIDNSLMSEDKEILEDLIAAAVNSAVKKVEENSTASSDIYKMAKDAGIDLPSGINFPFK.

It belongs to the YbaB/EbfC family. Homodimer.

Its subcellular location is the cytoplasm. It localises to the nucleoid. Binds to DNA and alters its conformation. May be involved in regulation of gene expression, nucleoid organization and DNA protection. This is Nucleoid-associated protein FTM_1023 from Francisella tularensis subsp. mediasiatica (strain FSC147).